The primary structure comprises 824 residues: Type IV secretion system protein PtlC (824 aa).

456 to 463 (GQSGSGKT) lines the ATP pocket.

The protein belongs to the TrbE/VirB4 family.

The protein localises to the cell membrane. Its function is as follows. Component of the type IV secretion system ptl essential for secretion of assembled pertussis toxin (PTX) through the outer membrane. The polypeptide is Type IV secretion system protein PtlC (ptlC) (Bordetella pertussis (strain Tohama I / ATCC BAA-589 / NCTC 13251)).